The sequence spans 552 residues: Putative transport protein PBPRA2144 (552 aa).

A run of 5 helical transmembrane segments spans residues 4–24, 26–46, 65–85, 95–115, and 158–178; these read IALSISILALVAVLGLWIGNW, ICGVGLGIGGVLFGGIFVGHF, FGLILFVYTIGIQVGPGFFAS, AFAALVVLLGCIVAIGLYKIF, and MGYAVAYPFGICGILLTMWIL. RCK C-terminal domains are found at residues 188–276 and 279–361; these read KEAE…VIGE and DASL…IVGN. The next 6 helical transmembrane spans lie at 371 to 391, 394 to 414, 439 to 459, 464 to 484, 493 to 513, and 532 to 552; these read MLPVFVGIGLGVLLGSIPFYL, FPAAIKLGLAGGPLLVALILA, IVLFLAVVGLKSGGGFVDTLV, LSWMGYGIVITLVPLLTVGFL, YLTICGMLAGSMTDPPALAFA, and PLVMCLRILSPQILALLLWAV.

It belongs to the AAE transporter (TC 2.A.81) family. YidE subfamily.

It localises to the cell membrane. The polypeptide is Putative transport protein PBPRA2144 (Photobacterium profundum (strain SS9)).